A 456-amino-acid polypeptide reads, in one-letter code: Ribulose bisphosphate carboxylase large chain (456 aa).

Lys7 bears the N6,N6,N6-trimethyllysine mark. Residues Asn116 and Thr166 each contribute to the substrate site. Lys168 serves as the catalytic Proton acceptor. Lys170 contacts substrate. Positions 194, 196, and 197 each coordinate Mg(2+). Position 194 is an N6-carboxylysine (Lys194). His287 serves as the catalytic Proton acceptor. Substrate is bound by residues Arg288, His320, and Ser372.

Belongs to the RuBisCO large chain family. Type I subfamily. Heterohexadecamer of 8 large chains and 8 small chains; disulfide-linked. The disulfide link is formed within the large subunit homodimers. Mg(2+) is required as a cofactor. Post-translationally, the disulfide bond which can form in the large chain dimeric partners within the hexadecamer appears to be associated with oxidative stress and protein turnover.

It is found in the plastid. The protein resides in the chloroplast. It carries out the reaction 2 (2R)-3-phosphoglycerate + 2 H(+) = D-ribulose 1,5-bisphosphate + CO2 + H2O. It catalyses the reaction D-ribulose 1,5-bisphosphate + O2 = 2-phosphoglycolate + (2R)-3-phosphoglycerate + 2 H(+). Functionally, ruBisCO catalyzes two reactions: the carboxylation of D-ribulose 1,5-bisphosphate, the primary event in carbon dioxide fixation, as well as the oxidative fragmentation of the pentose substrate in the photorespiration process. Both reactions occur simultaneously and in competition at the same active site. The polypeptide is Ribulose bisphosphate carboxylase large chain (Barnardia japonica (Chinese squill)).